The chain runs to 1417 residues: MKDLVKFLKAQSKTSEDFDVIKIGLASPDMIRSWSFGEVKKPETINYRTFKPERDGLFCARIFGPVKDYECLCGKYKRLKHRGVICEKCGVEVTQTKVRRERMGHIELASPVAHIWFLKSLPSRIGLLLDMPLRDIERVLYFESYIVIEPGMTDLDKGQLLTEEQYIDAEDRWGDEFDAKMGAEAIQALLRDMDLPQECENLREELQETNSETKRKKITKRLKLLEAFIQSGNKPEWMVMTVLPVLPPDLRPLVPLDGGRFATSDLNDLYRRVINRNNRLKRLLDLIAPDIIVRNEKRMLQESVDALLDNGRRGRAITGSNRRPLKSLADMIKGKQGRFRQNLLGKRVDYSGRSVITVGPYLHLHQCGLPKKMALELFRPFIYAKLESRGFASTIKAAKKMVEREDAIVWDILADVIREHPILLNRAPTLHRLGIQAFEPLLIEGKAIQLHPLVCAAFNADFDGDQMAVHVPLTLEAQLEARALMMSTNNILSPANGEPIIVPSQDVVLGLYYMTRDKVNGKGEGMLLQDPREAEKAYRTGQVELHSRVKVRITEYVKNAVGEFEPQTNLVDTTIGRAILWMIAPKGMPFSLFNQTLGKKAISKLINESYRRLGMKPSVLFADQIMYTGFAYAARSGSSVGIDDMVIPAKKYEIISAAEDEVAEIQEQFQSGLVTAGERYNKVIDIWAAANERVAKAMMENLSTEEVINREGQPEKQASFNSIFMMADSGARGSAAQIRQLAGMRGLMARPDGSIIETPITANFREGLNVLQYFISTHGARKGLADTALKTANSGYLTRRLVDVAQDLVIIEDDCGTHEGIVMTPLIEGGDVKEALRDRVLGRVVAEDVLKPGTEEVLIARNTLLDEKLCDVIDSNSVDSIKVRSVVTCNTDFGVCAKCYGRDLARGHLINQGEAVGVIAAQSIGEPGTQLTMRTFHIGGAASAAAKESSIQVKNTGTLRLANVKFVTNNEGKLVLTSRNTELTIIDAFGRTKEHYKVPYGAILSKGDGQEVTAGETVANWDPHTMPVVSEVSGFVKFIDLIDGLTVTRQTDELTGLSSIVVQDVGERATAGKDLRPAIKLVDAKGNDILIPGTDVVAQYFLPGKAIVTLDDNAEVHIGEPLARIPQESVGTKDITGGLPRVADLFEARKPKEPAILAEISGIVSFGKETKGKRRLLITPAEGETYEEMIPKWRQLNVFEGEMVERGDLISDGAETPHDILRLRGVHAVTEYIVNEVQEVYRLQGVKINDKHIEVIVRQMLRKGIVTKAYDSEFLEGEQVEVARVKIVNRKREAEGKPLVEFERELLGITKASLATESFISAASFQETTRVLTEAAVAGKRDELRGLKENVIVGRLIPAGTGFAYHQNRQKKVVMSDEMPVKLSAADEEEIAAEFTVTAEDATASLAEMLNMADDAE.

Zn(2+) contacts are provided by C71, C73, C86, and C89. Mg(2+) is bound by residues D461, D463, and D465. Positions 815, 889, 896, and 899 each coordinate Zn(2+).

It belongs to the RNA polymerase beta' chain family. As to quaternary structure, the RNAP catalytic core consists of 2 alpha, 1 beta, 1 beta' and 1 omega subunit. When a sigma factor is associated with the core the holoenzyme is formed, which can initiate transcription. Requires Mg(2+) as cofactor. Zn(2+) is required as a cofactor.

It carries out the reaction RNA(n) + a ribonucleoside 5'-triphosphate = RNA(n+1) + diphosphate. Its function is as follows. DNA-dependent RNA polymerase catalyzes the transcription of DNA into RNA using the four ribonucleoside triphosphates as substrates. The polypeptide is DNA-directed RNA polymerase subunit beta' (Pasteurella multocida (strain Pm70)).